Consider the following 309-residue polypeptide: 2-oxoacid:ferredoxin oxidoreductase 2, subunit beta (309 aa).

[4Fe-4S] cluster contacts are provided by Cys-17, Cys-20, and Cys-51. Thiamine diphosphate-binding positions include 49–52 (IGCS) and His-68. Asp-93 contributes to the Mg(2+) binding site. A thiamine diphosphate-binding site is contributed by 94–95 (GD). Residues Asn-121 and Val-123 each contribute to the Mg(2+) site. 125 to 126 (GL) contributes to the thiamine diphosphate binding site. Cys-200 is a [4Fe-4S] cluster binding site.

As to quaternary structure, heterodimer composed of an alpha and a beta subunit. [4Fe-4S] cluster serves as cofactor. It depends on thiamine diphosphate as a cofactor. Mg(2+) is required as a cofactor.

The enzyme catalyses a 2-oxocarboxylate + 2 oxidized [2Fe-2S]-[ferredoxin] + CoA = an acyl-CoA + 2 reduced [2Fe-2S]-[ferredoxin] + CO2 + H(+). Functionally, catalyzes the coenzyme A-dependent oxidative decarboxylation of different 2-oxoacids such as pyruvate, 2-oxobutyrate, glyoxylate and 2-oxoglutarate to form their CoA derivatives. This chain is 2-oxoacid:ferredoxin oxidoreductase 2, subunit beta, found in Aeropyrum pernix (strain ATCC 700893 / DSM 11879 / JCM 9820 / NBRC 100138 / K1).